The sequence spans 59 residues: uncharacterized protein (59 aa).

A helical membrane pass occupies residues 7–27 (LLLLVAIALISAFALTVTGVV).

It is found in the membrane. This is an uncharacterized protein from Pyrobaculum aerophilum (strain ATCC 51768 / DSM 7523 / JCM 9630 / CIP 104966 / NBRC 100827 / IM2).